A 485-amino-acid polypeptide reads, in one-letter code: MSLFDHSVSELHKKLNNKEISVTDLVEESYKRIADVEDNVKAFLTLNEENARAKAKELDAKIGAEDNGLLFGMPIGVKDNIVTKGLRTTCASKMLANFDPIYDATVVQKLNEADTITIGKLNMDEFAMGSSNENSGFYATKNPWNLEYVPGGSSGGSAAAVAAGEVLFSLGSDTGGSIRQPAAYCGVVGLKPTYGRVSRYGLVAFASSLDQIGPITRTVEDNAYLLQAISGVDRMDATSANIEVGNYLAGLTGDVKGLRIAVPKEYLGEGVGEEARESVLAALKVLEGMGATWEEVSLPHSKYALATYYLISSSEASSNLSRFDGVRYGVRSDNVNNLMDLYKNTRSEGFGDEVKRRIMLGTFALSSGYYDAYYKKAQQVRTLIKNDFENVFANYDVIIGPTTPTPAFKVGEKIDDPMTMYANDILTIPVNLAGVPAISVPCGFGANNMPLGLQIIGKHFDEATIYRVAHAFEQATDYHTKKASL.

Catalysis depends on charge relay system residues lysine 78 and serine 153. Serine 177 (acyl-ester intermediate) is an active-site residue.

It belongs to the amidase family. GatA subfamily. Heterotrimer of A, B and C subunits.

It catalyses the reaction L-glutamyl-tRNA(Gln) + L-glutamine + ATP + H2O = L-glutaminyl-tRNA(Gln) + L-glutamate + ADP + phosphate + H(+). In terms of biological role, allows the formation of correctly charged Gln-tRNA(Gln) through the transamidation of misacylated Glu-tRNA(Gln) in organisms which lack glutaminyl-tRNA synthetase. The reaction takes place in the presence of glutamine and ATP through an activated gamma-phospho-Glu-tRNA(Gln). This is Glutamyl-tRNA(Gln) amidotransferase subunit A from Bacillus cytotoxicus (strain DSM 22905 / CIP 110041 / 391-98 / NVH 391-98).